Consider the following 623-residue polypeptide: Zinc finger protein 143 (623 aa).

7 C2H2-type zinc fingers span residues 230–254, 260–284, 290–314, 320–344, 350–374, 380–404, and 410–433; these read FRCE…ERSH, YICD…VRTH, YRCQ…TRTH, FKCP…IRTH, YYCA…MRIH, YVCT…HVVH, and YNCN…RTAH.

It belongs to the GLI C2H2-type zinc-finger protein family.

It localises to the nucleus. Transcriptional activator. Activates the gene for selenocysteine tRNA (tRNAsec). Binds to the activator element (AE) motif of the selenocysteine tRNA gene promoter. This is Zinc finger protein 143 (znf143) from Danio rerio (Zebrafish).